Here is a 418-residue protein sequence, read N- to C-terminus: LL-diaminopimelate aminotransferase (418 aa).

Substrate contacts are provided by Tyr25 and Gly52. Residues Tyr78, 115 to 116 (SK), Tyr140, Asn190, Tyr221, and 248 to 250 (SFS) contribute to the pyridoxal 5'-phosphate site. Substrate contacts are provided by Lys116, Tyr140, and Asn190. At Lys251 the chain carries N6-(pyridoxal phosphate)lysine. Arg259 serves as a coordination point for pyridoxal 5'-phosphate.

Belongs to the class-I pyridoxal-phosphate-dependent aminotransferase family. As to quaternary structure, homodimer. Pyridoxal 5'-phosphate serves as cofactor.

It is found in the cytoplasm. It catalyses the reaction (2S,6S)-2,6-diaminopimelate + 2-oxoglutarate = (S)-2,3,4,5-tetrahydrodipicolinate + L-glutamate + H2O + H(+). It participates in amino-acid biosynthesis; L-lysine biosynthesis via DAP pathway; LL-2,6-diaminopimelate from (S)-tetrahydrodipicolinate (aminotransferase route): step 1/1. Functionally, involved in the synthesis of meso-diaminopimelate (m-DAP or DL-DAP), required for both lysine and peptidoglycan biosynthesis. Catalyzes the direct conversion of tetrahydrodipicolinate to LL-diaminopimelate, a reaction that requires three enzymes in E.coli. The protein is LL-diaminopimelate aminotransferase (dapL) of Methanocaldococcus jannaschii (strain ATCC 43067 / DSM 2661 / JAL-1 / JCM 10045 / NBRC 100440) (Methanococcus jannaschii).